The primary structure comprises 195 residues: MATQIEKIKQLREETAAGMMDVKRALEESGGDLDGARRILKERGQAIAAKKSRRETHEGRIEAYVHFNGRVGVLVEVNCETDFVARTPEFREFCRDIALHIASMKPLCVAPEDVPEEALAEEREIAEKQAAEMGKPEHITRQIVEGRLKKWVSEQALLTQPFAKDPGKTVGELLQETVSKVGENVVIRRFVRYEL.

Residues 81-84 (TDFV) are involved in Mg(2+) ion dislocation from EF-Tu.

It belongs to the EF-Ts family.

The protein localises to the cytoplasm. Its function is as follows. Associates with the EF-Tu.GDP complex and induces the exchange of GDP to GTP. It remains bound to the aminoacyl-tRNA.EF-Tu.GTP complex up to the GTP hydrolysis stage on the ribosome. The chain is Elongation factor Ts from Rubrobacter xylanophilus (strain DSM 9941 / JCM 11954 / NBRC 16129 / PRD-1).